Consider the following 197-residue polypeptide: Phosphoheptose isomerase (197 aa).

The SIS domain occupies 36-197 (LVHSLAQGGK…VDSLLLGVEE (162 aa)). 51 to 53 (NGG) is a substrate binding site. The Zn(2+) site is built by His60 and Glu64. Residues Glu64, 93–94 (ND), 119–121 (STS), Ser124, and Gln174 each bind substrate. Residues Gln174 and His182 each coordinate Zn(2+).

The protein belongs to the SIS family. GmhA subfamily. Homotetramer. Requires Zn(2+) as cofactor.

The protein resides in the cytoplasm. It carries out the reaction 2 D-sedoheptulose 7-phosphate = D-glycero-alpha-D-manno-heptose 7-phosphate + D-glycero-beta-D-manno-heptose 7-phosphate. The protein operates within carbohydrate biosynthesis; D-glycero-D-manno-heptose 7-phosphate biosynthesis; D-glycero-alpha-D-manno-heptose 7-phosphate and D-glycero-beta-D-manno-heptose 7-phosphate from sedoheptulose 7-phosphate: step 1/1. Its function is as follows. Catalyzes the isomerization of sedoheptulose 7-phosphate in D-glycero-D-manno-heptose 7-phosphate. In Thiobacillus denitrificans (strain ATCC 25259 / T1), this protein is Phosphoheptose isomerase.